The sequence spans 336 residues: Ornithine carbamoyltransferase, catabolic (336 aa).

Carbamoyl phosphate-binding positions include 62–65, glutamine 89, arginine 113, and 140–143; these read STRT and HPTQ. Residues asparagine 172, aspartate 236, and 240-241 contribute to the L-ornithine site; that span reads SM. Residues 277 to 278 and arginine 322 contribute to the carbamoyl phosphate site; that span reads CL.

Belongs to the aspartate/ornithine carbamoyltransferase superfamily. OTCase family.

It is found in the cytoplasm. It carries out the reaction carbamoyl phosphate + L-ornithine = L-citrulline + phosphate + H(+). It participates in amino-acid degradation; L-arginine degradation via ADI pathway; carbamoyl phosphate from L-arginine: step 2/2. Functionally, reversibly catalyzes the transfer of the carbamoyl group from carbamoyl phosphate (CP) to the N(epsilon) atom of ornithine (ORN) to produce L-citrulline. The protein is Ornithine carbamoyltransferase, catabolic (arcB) of Staphylococcus aureus (strain N315).